The following is a 557-amino-acid chain: MDDIDNIILHSLRQIDCDLDEDLQGLEQFTPAVLVRTVSKCLLLIDPSLDLPQTLPPGMAQRFTVTARLAEACTAVGYRRDIGYQTFLYSNVAEVRRVFMFLIEQLPKDSTDAADPEAPLDRVTDLENRILDSMRQQLRGRKDPATPLDLRNATLGWAGSRSRANIPFVTQSDVTAGTGLRGRKWLQTILICVFFLALAQKLSNTGYAGAGFGRRKRMKWIGGRQTTDDSILKLQAYYAQNKAQCPLAEELEEAAETPDRLGQLDALEQEIAAIETAISESRRQRRELHAKRRTVAESAQAVESVAEKLKEEKKIKERTHILLENPEVNVAKLESIIAAAGEKMKKLQSQWEAHRAPLVATLEEHQAKNSDQIESARHKSEEVIVDLQTKSALHARLVQEYERMGRTVSRTAYTSRILEIIGNIRKQKTDIDKILHDTRSLQKEINSITGQLDRQFTVTDDLIFRNAKRDEYCKRAYILLVALHTECSELTALVQETGTVKREVRELEDQIENEKDRNVVTNLAQIGQDLEEMQRESRRLEEAIQQLELSAGRNGTK.

2 coiled-coil regions span residues 260–350 (RLGQ…LQSQ) and 489–554 (ELTA…AGRN).

The protein belongs to the CCDC22 family.

This Anopheles gambiae (African malaria mosquito) protein is Coiled-coil domain-containing protein 22 homolog.